The following is an 83-amino-acid chain: U-actitoxin-Avd8d (83 aa).

A signal peptide spans 1–19 (MASTRLFVLLVIGTVLLCQ). A propeptide spanning residues 20–38 (VSGFLDELLAEHELPQDMT) is cleaved from the precursor.

Belongs to the sea anemone 8 toxin family.

The protein localises to the secreted. It localises to the nematocyst. The protein is U-actitoxin-Avd8d of Anemonia viridis (Snakelocks anemone).